The chain runs to 99 residues: Cell division protein FtsB (99 aa).

Residues 1–3 (MKF) are Cytoplasmic-facing. A helical transmembrane segment spans residues 4–21 (FVIALIVLLGLLQYRLWS). At 22–99 (GDNSLPEYFV…GDRSVSSPSQ (78 aa)) the chain is on the periplasmic side. Residues 31 to 73 (VLQKQIAAQQDGNAKLNERNQVLKEEIIDLKSGTEAIEERARN) adopt a coiled-coil conformation.

This sequence belongs to the FtsB family. In terms of assembly, part of a complex composed of FtsB, FtsL and FtsQ.

The protein resides in the cell inner membrane. In terms of biological role, essential cell division protein. May link together the upstream cell division proteins, which are predominantly cytoplasmic, with the downstream cell division proteins, which are predominantly periplasmic. This is Cell division protein FtsB from Shewanella sp. (strain MR-4).